A 191-amino-acid polypeptide reads, in one-letter code: Calcium-activated potassium channel subunit beta-1 (191 aa).

The Cytoplasmic portion of the chain corresponds to Met1–Arg15. A helical transmembrane segment spans residues Ala16–Thr36. At Thr37–Leu157 the chain is on the extracellular side. N-linked (GlcNAc...) asparagine glycosylation is found at Asn80 and Asn142. A helical membrane pass occupies residues Leu158–Val178. Topologically, residues Lys179–Lys191 are cytoplasmic.

It belongs to the KCNMB (TC 8.A.14.1) family. KCNMB1 subfamily. As to quaternary structure, interacts with KCNMA1 tetramer. There are probably 4 molecules of KCMNB1 per KCNMA1 tetramer. Post-translationally, N-glycosylated.

It localises to the membrane. Functionally, regulatory subunit of the calcium activated potassium KCNMA1 (maxiK) channel. Modulates the calcium sensitivity and gating kinetics of KCNMA1, thereby contributing to KCNMA1 channel diversity. Increases the apparent Ca(2+)/voltage sensitivity of the KCNMA1 channel. It also modifies KCNMA1 channel kinetics and alters its pharmacological properties. It slows down the activation and the deactivation kinetics of the channel. Acts as a negative regulator of smooth muscle contraction by enhancing the calcium sensitivity to KCNMA1. Its presence is also a requirement for internal binding of the KCNMA1 channel opener dehydrosoyasaponin I (DHS-1) triterpene glycoside and for external binding of the agonist hormone 17-beta-estradiol (E2). Increases the binding activity of charybdotoxin (CTX) toxin to KCNMA1 peptide blocker by increasing the CTX association rate and decreasing the dissociation rate. This is Calcium-activated potassium channel subunit beta-1 (KCNMB1) from Oryctolagus cuniculus (Rabbit).